Consider the following 89-residue polypeptide: Small ribosomal subunit protein uS15 (89 aa).

The protein belongs to the universal ribosomal protein uS15 family. In terms of assembly, part of the 30S ribosomal subunit. Forms a bridge to the 50S subunit in the 70S ribosome, contacting the 23S rRNA.

Its function is as follows. One of the primary rRNA binding proteins, it binds directly to 16S rRNA where it helps nucleate assembly of the platform of the 30S subunit by binding and bridging several RNA helices of the 16S rRNA. Functionally, forms an intersubunit bridge (bridge B4) with the 23S rRNA of the 50S subunit in the ribosome. The sequence is that of Small ribosomal subunit protein uS15 from Mycobacterium marinum (strain ATCC BAA-535 / M).